A 443-amino-acid chain; its full sequence is ATP-dependent protease ATPase subunit HslU (443 aa).

ATP-binding positions include I18, 60–65 (GVGKTE), D256, E321, and R393.

Belongs to the ClpX chaperone family. HslU subfamily. A double ring-shaped homohexamer of HslV is capped on each side by a ring-shaped HslU homohexamer. The assembly of the HslU/HslV complex is dependent on binding of ATP.

It localises to the cytoplasm. ATPase subunit of a proteasome-like degradation complex; this subunit has chaperone activity. The binding of ATP and its subsequent hydrolysis by HslU are essential for unfolding of protein substrates subsequently hydrolyzed by HslV. HslU recognizes the N-terminal part of its protein substrates and unfolds these before they are guided to HslV for hydrolysis. The chain is ATP-dependent protease ATPase subunit HslU from Shigella dysenteriae serotype 1 (strain Sd197).